A 478-amino-acid chain; its full sequence is Bifunctional protein HldE (478 aa).

The interval 1–318 is ribokinase; sequence MKVTLPDFRQ…ENAIRGRADT (318 aa). 195–198 is a binding site for ATP; the sequence is NLSE. Aspartate 264 is a catalytic residue. The segment at 344–478 is cytidylyltransferase; it reads MTNGCFDILH…NTIKANASKS (135 aa).

In the N-terminal section; belongs to the carbohydrate kinase PfkB family. This sequence in the C-terminal section; belongs to the cytidylyltransferase family. As to quaternary structure, homodimer.

It catalyses the reaction D-glycero-beta-D-manno-heptose 7-phosphate + ATP = D-glycero-beta-D-manno-heptose 1,7-bisphosphate + ADP + H(+). The enzyme catalyses D-glycero-beta-D-manno-heptose 1-phosphate + ATP + H(+) = ADP-D-glycero-beta-D-manno-heptose + diphosphate. It functions in the pathway nucleotide-sugar biosynthesis; ADP-L-glycero-beta-D-manno-heptose biosynthesis; ADP-L-glycero-beta-D-manno-heptose from D-glycero-beta-D-manno-heptose 7-phosphate: step 1/4. Its pathway is nucleotide-sugar biosynthesis; ADP-L-glycero-beta-D-manno-heptose biosynthesis; ADP-L-glycero-beta-D-manno-heptose from D-glycero-beta-D-manno-heptose 7-phosphate: step 3/4. Its function is as follows. Catalyzes the phosphorylation of D-glycero-D-manno-heptose 7-phosphate at the C-1 position to selectively form D-glycero-beta-D-manno-heptose-1,7-bisphosphate. Functionally, catalyzes the ADP transfer from ATP to D-glycero-beta-D-manno-heptose 1-phosphate, yielding ADP-D-glycero-beta-D-manno-heptose. This Pectobacterium carotovorum subsp. carotovorum (strain PC1) protein is Bifunctional protein HldE.